A 768-amino-acid polypeptide reads, in one-letter code: Vacuolar basic amino acid transporter 4 (768 aa).

Residues 1 to 252 (MGKKDRQRKK…HDLTRRRIFS (252 aa)) lie on the Cytoplasmic side of the membrane. The stretch at 9–40 (KKLREFAKLKNRQRNLRKSVQTLKNEVQREAK) forms a coiled coil. Positions 34 to 172 (EVQREAKVPR…ELPVSSSNSF (139 aa)) are disordered. A phosphoserine mark is found at serine 62, serine 99, and serine 106. A compositionally biased stretch (basic and acidic residues) spans 110-121 (KPADKANEDDLK). Positions 132–159 (SALQSSITDFSDRSVSPLQSITSCNTPM) are enriched in polar residues. Residues serine 160 and serine 192 each carry the phosphoserine modification. A helical membrane pass occupies residues 253 to 273 (SCMCTYLFFIAMDSSIILVIA). At 274-282 (SKIASEFHE) the chain is on the vacuolar side. The helical transmembrane segment at 283-305 (LWRLSLVISAYLLSNAIGQLVFL) threads the bilayer. The Cytoplasmic segment spans residues 306-311 (KLSLIS). Residues 312–331 (SVKLLLCIAQFSFILGGYLS) form a helical membrane-spanning segment. The Vacuolar segment spans residues 332–334 (WSS). Residues 335–357 (AHFWTFIFARCVTGFGGGSLIAL) traverse the membrane as a helical segment. Over 358–375 (KSTIMNRFSQKNDSRYSL) the chain is Cytoplasmic. A helical membrane pass occupies residues 376-396 (SASMITFAMGVVIGPFMMNLF). At 397–406 (DSSHGSGWRN) the chain is on the vacuolar side. Residues 407–427 (AFLIPVPFCLVNASIMLADMY) traverse the membrane as a helical segment. The Cytoplasmic segment spans residues 428 to 447 (SVKSTLYGRPTPTLWKRFKN). The chain crosses the membrane as a helical span at residues 448 to 468 (TLLSPDLYEILTLTLFLLCFV). Over 469 to 481 (QVTSLDLTGLKNN) the chain is Vacuolar. Asparagine 480 carries N-linked (GlcNAc...) asparagine glycosylation. Residues 482–502 (TMIQALLFSVIIVCGILFFLI) form a helical membrane-spanning segment. The Cytoplasmic segment spans residues 503-522 (ETSDTYMNSVISMSLQGDKR). Residues 523-543 (LIWTMIGISFCFAALMCIIPF) form a helical membrane-spanning segment. The Vacuolar portion of the chain corresponds to 544-562 (GTTYFIIVLNLSTLQLAER). Asparagine 553 carries N-linked (GlcNAc...) asparagine glycosylation. A helical transmembrane segment spans residues 563 to 583 (LSPFFFSIVLGYFSVSYFWKS). The Cytoplasmic portion of the chain corresponds to 584–587 (KGQN). A helical membrane pass occupies residues 588 to 608 (FLLKFVLSGATLLLYVALMGV). At 609–617 (SLNLPVWKQ) the chain is on the vacuolar side. The chain crosses the membrane as a helical span at residues 618–638 (YICLSLPFLGSSMILTLLSNL). Topologically, residues 639 to 653 (YHEYHEQRKSPISGS) are cytoplasmic. The chain crosses the membrane as a helical span at residues 654-674 (IVYCFGAVGGTVGISLGGYVF). At 675–734 (HKTLIKLMHEKVMPFSKQGYLKKDLLKIIKHATESSDWVHESAPKFVFQTLIECYLQACR) the chain is on the vacuolar side. A helical membrane pass occupies residues 735-755 (NVFKLSTLFFTITVVAIFIFN). The Cytoplasmic portion of the chain corresponds to 756 to 768 (RIHCRSQNCLSLS).

It belongs to the major facilitator superfamily.

It is found in the vacuole membrane. In terms of biological role, transporter required for vacuolar uptake of basic amino acids. The chain is Vacuolar basic amino acid transporter 4 (VBA4) from Saccharomyces cerevisiae (strain ATCC 204508 / S288c) (Baker's yeast).